The following is a 1074-amino-acid chain: Fibrous sheath CABYR-binding protein (1074 aa).

Residues 1 to 73 (MEECEEPEEP…SKDNYSRKEY (73 aa)) form a disordered region. Phosphoserine is present on residues Ser-25, Ser-57, Ser-186, and Ser-275. Disordered regions lie at residues 272 to 294 (QAPSPAEETSAAETATTTAKDVV) and 317 to 343 (LVQGALSDKPSDQQYPQGTEMAPSELP). Positions 274 to 290 (PSPAEETSAAETATTTA) are enriched in low complexity. Ser-365 carries the phosphoserine modification. Disordered stretches follow at residues 437-789 (VSAD…PLES) and 818-982 (GVPA…PLKT). The segment covering 448–467 (PPSAEDASEEVASSEVLPPS) has biased composition (low complexity). Pro residues predominate over residues 528-544 (VLPPPAEEAPAEVPPPL). A compositionally biased stretch (low complexity) spans 558–575 (EEGPAEVPLAPAEEVPAE). Pro residues-rich tracts occupy residues 576-592 (FLPPPAEEVPAEVPPPL) and 673-688 (PLPPTAERPEEAPPPA). Low complexity predominate over residues 689 to 720 (TEEAPVEVLPPATEEAPVEVLPPATEEAPVEV). Phosphoserine is present on Ser-1020. The disordered stretch occupies residues 1026–1054 (SEKELESTTLTSDKMSEGIDSVPEDVSGT).

As to quaternary structure, interacts with CABYR. Interacts with ROPN1 and ROPN1L; the interaction increases upon spermatozoa capacitation conditions. Post-translationally, phosphorylated by PKA upon spermatozoa capacitation conditions. In terms of tissue distribution, expression is restricted to testis and epididymis, expressed by spermatozoa.

The protein localises to the cell projection. The protein resides in the cilium. Its subcellular location is the flagellum. Its function is as follows. May be involved in the later stages of fibrous sheath biogenesis and spermatozoa capacitation. Inhibits ROPN1 and ROPN1L SUMOylation. Binds calcium. This chain is Fibrous sheath CABYR-binding protein, found in Mus musculus (Mouse).